We begin with the raw amino-acid sequence, 103 residues long: uncharacterized protein (103 aa).

A run of 3 helical transmembrane segments spans residues 12 to 34, 49 to 66, and 79 to 101; these read GFSW…LTIS, TLMS…ALIA, and FARG…VAGG.

Its subcellular location is the cell membrane. This is an uncharacterized protein from Pasteurella multocida (strain Pm70).